Consider the following 499-residue polypeptide: Phenylalanine--tRNA ligase alpha subunit (499 aa).

L-phenylalanine is bound by residues Thr-333, Gln-372–Glu-374, and Tyr-412. Glu-414 is a Mg(2+) binding site. Phe-436 contacts L-phenylalanine.

It belongs to the class-II aminoacyl-tRNA synthetase family. Phe-tRNA synthetase alpha subunit type 2 subfamily. In terms of assembly, tetramer of two alpha and two beta subunits. The cofactor is Mg(2+).

The protein localises to the cytoplasm. It carries out the reaction tRNA(Phe) + L-phenylalanine + ATP = L-phenylalanyl-tRNA(Phe) + AMP + diphosphate + H(+). This chain is Phenylalanine--tRNA ligase alpha subunit, found in Thermoplasma acidophilum (strain ATCC 25905 / DSM 1728 / JCM 9062 / NBRC 15155 / AMRC-C165).